A 367-amino-acid chain; its full sequence is Peptide chain release factor 2 (367 aa).

N5-methylglutamine is present on Gln-254.

Belongs to the prokaryotic/mitochondrial release factor family. Post-translationally, methylated by PrmC. Methylation increases the termination efficiency of RF2.

The protein localises to the cytoplasm. Peptide chain release factor 2 directs the termination of translation in response to the peptide chain termination codons UGA and UAA. In Variovorax paradoxus (strain S110), this protein is Peptide chain release factor 2.